We begin with the raw amino-acid sequence, 102 residues long: MTGIPMEHGLALAAALFCIGLVGLMVRRNILFILMSLEVMMNAAALAFVVAGARWGQPDGQVMFIMVITLAAAEASIGLAILLQLYRRFNTLDIDAASEMRG.

3 helical membrane-spanning segments follow: residues 6 to 26 (MEHG…GLMV), 30 to 50 (ILFI…AFVV), and 62 to 82 (VMFI…LAIL).

It belongs to the complex I subunit 4L family. As to quaternary structure, NDH-1 is composed of 13 different subunits. Subunits NuoA, H, J, K, L, M, N constitute the membrane sector of the complex.

It is found in the cell inner membrane. The catalysed reaction is a quinone + NADH + 5 H(+)(in) = a quinol + NAD(+) + 4 H(+)(out). Functionally, NDH-1 shuttles electrons from NADH, via FMN and iron-sulfur (Fe-S) centers, to quinones in the respiratory chain. The immediate electron acceptor for the enzyme in this species is believed to be ubiquinone. Couples the redox reaction to proton translocation (for every two electrons transferred, four hydrogen ions are translocated across the cytoplasmic membrane), and thus conserves the redox energy in a proton gradient. The protein is NADH-quinone oxidoreductase subunit K of Ectopseudomonas mendocina (strain ymp) (Pseudomonas mendocina).